We begin with the raw amino-acid sequence, 209 residues long: 3-dehydroquinate dehydratase (209 aa).

3-dehydroquinate contacts are provided by residues Ser-6, 25–27 (ELR), and Arg-55. Catalysis depends on His-109, which acts as the Proton donor/acceptor. Lys-134 serves as the catalytic Schiff-base intermediate with substrate. 3-dehydroquinate is bound by residues Arg-172 and Gln-195.

It belongs to the type-I 3-dehydroquinase family. In terms of assembly, homodimer.

It carries out the reaction 3-dehydroquinate = 3-dehydroshikimate + H2O. Its pathway is metabolic intermediate biosynthesis; chorismate biosynthesis; chorismate from D-erythrose 4-phosphate and phosphoenolpyruvate: step 3/7. Functionally, involved in the third step of the chorismate pathway, which leads to the biosynthesis of aromatic amino acids. Catalyzes the cis-dehydration of 3-dehydroquinate (DHQ) and introduces the first double bond of the aromatic ring to yield 3-dehydroshikimate. The sequence is that of 3-dehydroquinate dehydratase from Methanoregula boonei (strain DSM 21154 / JCM 14090 / 6A8).